The chain runs to 400 residues: ELAV-like protein 4 (400 aa).

Residues 12 to 48 are disordered; the sequence is TMEPQVSNGPTSNTSNGPSSNSRNCPSPMQTGAATDD. A compositionally biased stretch (low complexity) spans 18 to 33; sequence SNGPTSNTSNGPSSNS. A compositionally biased stretch (polar residues) spans 34-44; that stretch reads RNCPSPMQTGA. 3 RRM domains span residues 51–158, 166–246, and 317–395; these read TNLI…YARP, ANLY…FANN, and WCIF…FKTN.

This sequence belongs to the RRM elav family.

The protein resides in the cytoplasm. Its subcellular location is the perikaryon. It localises to the cell projection. The protein localises to the axon. It is found in the dendrite. The protein resides in the growth cone. Its function is as follows. RNA-binding protein that is involved in the post-transcriptional regulation of mRNAs. Plays a role in the regulation of mRNA stability, alternative splicing and translation. Binds to AU-rich element (ARE) sequences in the 3' untranslated region (3'UTR) of target mRNAs. Mainly plays a role in neuron-specific RNA processing. In Xenopus tropicalis (Western clawed frog), this protein is ELAV-like protein 4 (elavl4).